Consider the following 247-residue polypeptide: MSAQMALSLSGVHKSFGTTSVLKNVEFSLTKGECIAIVGKSGCGKSTLLRLLARLEQPTAGEVYIPNGDIVRMMFQEGRLLPWKTVLQNVMLGLKHDRKRKALEAIKSVQLEGKENEWPRALSGGQKQRVALARTLVHSPHVLLLDEPLGALDALTRREMQQLIEKIWLQRGFSVVLVTHDIDEAVTLADRVYVIENGSIANTYDINLPRPRKRSSYEFVETAEEILNRVLGVNATNGHLVSLSNIK.

The 216-residue stretch at 7 to 222 (LSLSGVHKSF…KRSSYEFVET (216 aa)) folds into the ABC transporter domain. 39–46 (GKSGCGKS) contributes to the ATP binding site.

Belongs to the ABC transporter superfamily. Aliphatic sulfonates importer (TC 3.A.1.17.2) family. The complex is composed of two ATP-binding proteins (SsuB), two transmembrane proteins (SsuC) and a solute-binding protein (SsuA).

Its subcellular location is the cell membrane. The enzyme catalyses ATP + H2O + aliphatic sulfonate-[sulfonate-binding protein]Side 1 = ADP + phosphate + aliphatic sulfonateSide 2 + [sulfonate-binding protein]Side 1.. Part of the ABC transporter complex SsuABC involved in aliphatic sulfonates import. Responsible for energy coupling to the transport system. This Shouchella clausii (strain KSM-K16) (Alkalihalobacillus clausii) protein is Aliphatic sulfonates import ATP-binding protein SsuB 1.